Reading from the N-terminus, the 222-residue chain is MFSKQVTDSPIYKWFDNRLEIQAISDDITSKYVPPHVNIFYCLGGITLVCFIIQFATGFAMTFYYKPTVTDAFASVQYIMNEVNFGWLIRSIHRWSASMMVLMMILHVFRVYLTGGFKKPRELTWMTGVILAVITVSFGVTGYSLPWDQVGYWAVKIVSGVPAAIPVVGDQMVELLRGGQSVGQATLTRFYSLHTFVFPWLIAVFMLMHFLMIRKQGISGPL.

A helical membrane pass occupies residues 39–59; sequence IFYCLGGITLVCFIIQFATGF. C42 contacts heme c. Positions 93 and 107 each coordinate heme b. The next 3 helical transmembrane spans lie at 97–117, 123–143, and 193–213; these read ASMM…TGGF, LTWM…VTGY, and LHTF…FLMI. 2 residues coordinate heme b: H194 and H209.

The protein belongs to the cytochrome b family. PetB subfamily. The 4 large subunits of the cytochrome b6-f complex are cytochrome b6, subunit IV (17 kDa polypeptide, PetD), cytochrome f and the Rieske protein, while the 4 small subunits are PetG, PetL, PetM and PetN. The complex functions as a dimer. Requires heme b as cofactor. Heme c is required as a cofactor.

The protein resides in the cellular thylakoid membrane. Functionally, component of the cytochrome b6-f complex, which mediates electron transfer between photosystem II (PSII) and photosystem I (PSI), cyclic electron flow around PSI, and state transitions. This is Cytochrome b6 from Rippkaea orientalis (strain PCC 8801 / RF-1) (Cyanothece sp. (strain PCC 8801)).